The sequence spans 310 residues: Regulator of microtubule dynamics protein 1 (310 aa).

Lysine 165 bears the N6-succinyllysine mark. TPR repeat units follow at residues alanine 168–aspartate 204 and proline 222–phenylalanine 258.

The protein belongs to the RMDN family. Interacts with microtubules.

It is found in the cytoplasm. It localises to the cytoskeleton. Its subcellular location is the spindle. The protein resides in the spindle pole. This Rattus norvegicus (Rat) protein is Regulator of microtubule dynamics protein 1 (Rmdn1).